The chain runs to 365 residues: Aminomethyltransferase (365 aa).

It belongs to the GcvT family. The glycine cleavage system is composed of four proteins: P, T, L and H.

The catalysed reaction is N(6)-[(R)-S(8)-aminomethyldihydrolipoyl]-L-lysyl-[protein] + (6S)-5,6,7,8-tetrahydrofolate = N(6)-[(R)-dihydrolipoyl]-L-lysyl-[protein] + (6R)-5,10-methylene-5,6,7,8-tetrahydrofolate + NH4(+). Its function is as follows. The glycine cleavage system catalyzes the degradation of glycine. This is Aminomethyltransferase from Natranaerobius thermophilus (strain ATCC BAA-1301 / DSM 18059 / JW/NM-WN-LF).